The primary structure comprises 255 residues: Pyridoxine 5'-phosphate synthase (255 aa).

Residue asparagine 6 coordinates 3-amino-2-oxopropyl phosphate. 8-9 (DH) contributes to the 1-deoxy-D-xylulose 5-phosphate binding site. Arginine 17 lines the 3-amino-2-oxopropyl phosphate pocket. Residue histidine 41 is the Proton acceptor of the active site. Residues arginine 43 and histidine 48 each contribute to the 1-deoxy-D-xylulose 5-phosphate site. Glutamate 68 (proton acceptor) is an active-site residue. Position 96 (threonine 96) interacts with 1-deoxy-D-xylulose 5-phosphate. Histidine 208 functions as the Proton donor in the catalytic mechanism. Residues glycine 209 and 230 to 231 (GQ) contribute to the 3-amino-2-oxopropyl phosphate site.

The protein belongs to the PNP synthase family. Homooctamer; tetramer of dimers.

It is found in the cytoplasm. The catalysed reaction is 3-amino-2-oxopropyl phosphate + 1-deoxy-D-xylulose 5-phosphate = pyridoxine 5'-phosphate + phosphate + 2 H2O + H(+). The protein operates within cofactor biosynthesis; pyridoxine 5'-phosphate biosynthesis; pyridoxine 5'-phosphate from D-erythrose 4-phosphate: step 5/5. Its function is as follows. Catalyzes the complicated ring closure reaction between the two acyclic compounds 1-deoxy-D-xylulose-5-phosphate (DXP) and 3-amino-2-oxopropyl phosphate (1-amino-acetone-3-phosphate or AAP) to form pyridoxine 5'-phosphate (PNP) and inorganic phosphate. The chain is Pyridoxine 5'-phosphate synthase from Campylobacter lari (strain RM2100 / D67 / ATCC BAA-1060).